We begin with the raw amino-acid sequence, 501 residues long: MASQSKNSGLTNKVTTVVATNAFGADVMSEISYTDAKVVGNGSFGVVFQAKMVPSNEMVAIKKVLQDRRFKNRELQIMRKLRHDNIITLKWFFFSSGEKRDEVYLNLVMEFLPETLYKVERQYARAKQTLPVNFVRLYMYQLLRSMGYLHSLGFCHRDIKPQNMLLDSETGVLKLCDFGSAKQLISGEPNVSYICSRYYRAPELIFGSTDYTTKIDMWSAGCVMSELLLGQLIFPGDSGVDQIVEIVKVMGTPTSEQLHDMNPHYKQFKLPELKPHPWSKVFRIRTPAEAIDLVSKMLIYSPNARVSPLMGCAHPFFDELRQDPHQQLPNGRSLPPLFNFTDYEKTIEPDTMPLLLPRAQGSSTTKEPSAAHRNRNTAGEESPRKTEDSQKPATAALSKSPGPSGKALESPPGFLQHDLGNGDHVAVGTMPMEPLTLEQNHFAAESYAVGEDAEDNLEEDVGDENDYDYDDGGQCNSTYISDDMDEASESDDDDFEEEDEN.

Residues 33–317 (YTDAKVVGNG…PLMGCAHPFF (285 aa)) form the Protein kinase domain. ATP contacts are provided by residues 39–47 (VGNGSFGVV) and K62. D158 serves as the catalytic Proton acceptor. At Y193 the chain carries Phosphotyrosine. Disordered stretches follow at residues 355–427 (LLPR…HVAV) and 446–501 (SYAV…EDEN). A compositionally biased stretch (basic and acidic residues) spans 381 to 390 (ESPRKTEDSQ). Composition is skewed to acidic residues over residues 451–471 (EDAE…DYDD) and 482–501 (DDMD…EDEN).

It belongs to the protein kinase superfamily. CMGC Ser/Thr protein kinase family. GSK-3 subfamily. Post-translationally, phosphorylation on Tyr-193 is necessary for the activity.

The catalysed reaction is L-seryl-[tau protein] + ATP = O-phospho-L-seryl-[tau protein] + ADP + H(+). It catalyses the reaction L-threonyl-[tau protein] + ATP = O-phospho-L-threonyl-[tau protein] + ADP + H(+). This chain is Putative glycogen synthase kinase-3 homolog (gskt), found in Drosophila melanogaster (Fruit fly).